The primary structure comprises 145 residues: DNA polymerase epsilon subunit 3 (145 aa).

Alanine 2 is modified (N-acetylalanine). Position 83 is a phosphothreonine (threonine 83). A coiled-coil region spans residues 85–144; that stretch reads LKEALEAYRREQKGKKEASEQKKKDKDKKDCEEQDKSREEEDEDEERLDEEEQNEEEEVD. The span at 93–123 shows a compositional bias: basic and acidic residues; sequence RREQKGKKEASEQKKKDKDKKDCEEQDKSRE. Positions 93–145 are disordered; it reads RREQKGKKEASEQKKKDKDKKDCEEQDKSREEEDEDEERLDEEEQNEEEEVDN. Serine 121 carries the post-translational modification Phosphoserine. Positions 124–145 are enriched in acidic residues; it reads EEDEDEERLDEEEQNEEEEVDN.

As to quaternary structure, component of the DNA polymerase epsilon complex consisting of four subunits: the catalytic subunit POLE and the accessory subunits POLE2, POLE3 and POLE4. Interaction with POLE4 is a prerequisite for further binding with POLE and POLE2. Heterodimer with CHRAC1; binds to DNA. Component of the CHRAC ISWI chromatin remodeling complex at least composed of SMARCA5/SNF2H, BAZ1A/ACF1, CHRAC1 and POLE3; the complex preferentially binds DNA through the CHRAC1-POLE3 heterodimer and possesses ATP-dependent nucleosome-remodeling activity. Within the complex, the heterodimer with CHRAC1 interacts with SMARCA5/SNF2H; the interaction is direct and enhances nucleosome sliding activity by the SMARCA5/SNF2H and BAZ1A/ACF1 interaction. Within the complex, the heterodimer with CHRAC1 interacts with BAZ1A/ACF1; the interactions are direct.

The protein resides in the nucleus. Accessory component of the DNA polymerase epsilon complex. Participates in DNA repair and in chromosomal DNA replication. Forms a complex with CHRAC1 and binds naked DNA, which is then incorporated into chromatin, aided by the nucleosome-remodeling activity of ISWI/SNF2H and ACF1. Does not enhance nucleosome sliding activity of the ACF-5 ISWI chromatin remodeling complex. In Rattus norvegicus (Rat), this protein is DNA polymerase epsilon subunit 3 (Pole3).